Consider the following 238-residue polypeptide: Ribosomal RNA small subunit methyltransferase G (238 aa).

S-adenosyl-L-methionine contacts are provided by residues glycine 77, phenylalanine 82, 128–129 (AE), and arginine 147.

Belongs to the methyltransferase superfamily. RNA methyltransferase RsmG family.

It is found in the cytoplasm. Its function is as follows. Specifically methylates the N7 position of guanine in position 535 of 16S rRNA. The chain is Ribosomal RNA small subunit methyltransferase G from Brevibacillus brevis (strain 47 / JCM 6285 / NBRC 100599).